Here is a 1993-residue protein sequence, read N- to C-terminus: Otoferlin (1993 aa).

The region spanning 1–98 (MALIVHLKTV…VEENRVEVSD (98 aa)) is the C2 1 domain. The Cytoplasmic segment spans residues 1-1959 (MALIVHLKTV…IKYLICTRYK (1959 aa)). Residues 127-212 (PWDDGDFLGD…KEEPQRQDEP (86 aa)) are disordered. Positions 129 to 145 (DDGDFLGDESLQEEEKD) are enriched in acidic residues. 2 stretches are compositionally biased toward basic and acidic residues: residues 163–186 (PGEK…EHKA) and 202–211 (HKEEPQRQDE). 2 C2 domains span residues 251–372 (KRSK…HKWA) and 415–546 (IEGN…FLPT). A disordered region spans residues 654–708 (NYGNEVDGTSRPQRPRPRKEPGDEEEVDLIQNSSDDEGDEAGDLASVSSTPPMRP). A compositionally biased stretch (acidic residues) spans 675–695 (GDEEEVDLIQNSSDDEGDEAG). Positions 807 to 836 (RERLKSCMRELESMGQQAKSLRAQVKRHTV) form a coiled coil. 2 consecutive C2 domains span residues 959–1084 (LHSF…PPRF) and 1131–1257 (RGPI…ANWN). Residues Asp-991, Asp-997, Asp-1053, Asp-1055, and Asp-1061 each contribute to the Ca(2+) site. 2 disordered regions span residues 1294 to 1318 (AEDE…EEPD) and 1339 to 1398 (LRQH…EKKK). Residues 1348–1357 (DLEEKEEMDS) are compositionally biased toward acidic residues. Residues 1366-1379 (KNKEKSRAAKEEKK) are compositionally biased toward basic and acidic residues. C2 domains are found at residues 1460 to 1589 (LPED…ATCG) and 1710 to 1861 (DMPA…KQCT). Residues Asp-1504, Asp-1510, Asp-1559, Asp-1561, Asp-1567, Asp-1832, Ser-1835, and Asp-1838 each coordinate Ca(2+). A helical membrane pass occupies residues 1960-1980 (WLIIKIVLALLGLLMLALFLY). At 1981–1993 (SLPGYMVKKLLGA) the chain is on the extracellular side.

This sequence belongs to the ferlin family. In terms of assembly, interacts with SNAP25; the interaction is direct. Interacts with STX1; the interaction is direct. Interacts with RAB8B. Requires Ca(2+) as cofactor. As to expression, isoform 1 is expressed in the cochlea and brain. Expressed in cerebellum (Purkinje cells), hippocampus (granule cells of the dentate gyrus and in pyramidal cells of the CA1-CA3 region) and cortex (stellate and pyramidal cells). Expressed in hair cells of vestibular organs such as the saccule, utricle and crista ampullari. Expressed in the cochlear inner and outer cells (IHCs and OHCs) (at protein level). Expressed in brain: brainstem, cerebellum (granules cells and Purkinje cell layer), cortex (layers IV and V), inferior colliculus, superior colliculus and hippocampus (granule cells of the dentate gyrus and in pyramidal cells of the CA1-CA3 region).

Its subcellular location is the cytoplasmic vesicle. It is found in the secretory vesicle. The protein resides in the synaptic vesicle membrane. The protein localises to the basolateral cell membrane. It localises to the endoplasmic reticulum membrane. Its subcellular location is the golgi apparatus membrane. It is found in the presynaptic cell membrane. The protein resides in the cell membrane. Its function is as follows. Key calcium ion sensor involved in the Ca(2+)-triggered synaptic vesicle-plasma membrane fusion and in the control of neurotransmitter release at these output synapses. Interacts in a calcium-dependent manner to the presynaptic SNARE proteins at ribbon synapses of cochlear inner hair cells (IHCs) to trigger exocytosis of neurotransmitter. Also essential to synaptic exocytosis in immature outer hair cells (OHCs). May also play a role within the recycling of endosomes. This chain is Otoferlin (Otof), found in Rattus norvegicus (Rat).